The following is a 334-amino-acid chain: Tryptophan--tRNA ligase (334 aa).

Residues 11 to 13 and 19 to 20 contribute to the ATP site; these read QPS and GN. Residues 12–20 carry the 'HIGH' region motif; the sequence is PSGELTIGN. D135 is a binding site for L-tryptophan. ATP contacts are provided by residues 147–149, V186, and 195–199; these read GED and KMSKS. The short motif at 195-199 is the 'KMSKS' region element; that stretch reads KMSKS.

Belongs to the class-I aminoacyl-tRNA synthetase family. In terms of assembly, homodimer.

It is found in the cytoplasm. It carries out the reaction tRNA(Trp) + L-tryptophan + ATP = L-tryptophyl-tRNA(Trp) + AMP + diphosphate + H(+). In terms of biological role, catalyzes the attachment of tryptophan to tRNA(Trp). The chain is Tryptophan--tRNA ligase from Klebsiella aerogenes (Enterobacter aerogenes).